The primary structure comprises 294 residues: 33 kDa chaperonin (294 aa).

2 disulfide bridges follow: cysteine 237–cysteine 239 and cysteine 270–cysteine 273.

Belongs to the HSP33 family. In terms of processing, under oxidizing conditions two disulfide bonds are formed involving the reactive cysteines. Under reducing conditions zinc is bound to the reactive cysteines and the protein is inactive.

The protein resides in the cytoplasm. Its function is as follows. Redox regulated molecular chaperone. Protects both thermally unfolding and oxidatively damaged proteins from irreversible aggregation. Plays an important role in the bacterial defense system toward oxidative stress. The protein is 33 kDa chaperonin of Geobacillus kaustophilus (strain HTA426).